Reading from the N-terminus, the 420-residue chain is Ribulose bisphosphate carboxylase (420 aa).

Residue lysine 155 is the Proton acceptor of the active site. A substrate-binding site is contributed by lysine 157. Residues lysine 181, aspartate 183, and glutamate 184 each coordinate Mg(2+). N6-carboxylysine is present on lysine 181. Histidine 273 (proton acceptor) is an active-site residue. Substrate is bound by residues arginine 274, histidine 306, 343-345 (SGG), and 365-368 (QAGG).

It belongs to the RuBisCO large chain family. Type III subfamily. Homodimer or homodecamer. In contrast to form I RuBisCO, the form III RuBisCO is composed solely of large subunits. The cofactor is Mg(2+).

It catalyses the reaction 2 (2R)-3-phosphoglycerate + 2 H(+) = D-ribulose 1,5-bisphosphate + CO2 + H2O. The catalysed reaction is D-ribulose 1,5-bisphosphate + O2 = 2-phosphoglycolate + (2R)-3-phosphoglycerate + 2 H(+). Catalyzes the addition of molecular CO(2) and H(2)O to ribulose 1,5-bisphosphate (RuBP), generating two molecules of 3-phosphoglycerate (3-PGA). Functions in an archaeal AMP degradation pathway, together with AMP phosphorylase and R15P isomerase. This is Ribulose bisphosphate carboxylase from Pyrococcus furiosus (strain ATCC 43587 / DSM 3638 / JCM 8422 / Vc1).